A 1099-amino-acid polypeptide reads, in one-letter code: R3H domain-containing protein 1 (1099 aa).

Residues 111-146 (SFEKEEKPSKDEAEKEKASDKLPRKMLSRDSSQEYT) are disordered. Over residues 112–142 (FEKEEKPSKDEAEKEKASDKLPRKMLSRDSS) the composition is skewed to basic and acidic residues. The R3H domain maps to 168 to 231 (RMMLLKLEQE…SVIVNKTSNT (64 aa)). Phosphoserine occurs at positions 187 and 262. An SUZ domain is found at 232–302 (RIPDQKFNEH…ARDRIFSQDS (71 aa)). The interval 267-287 (DNQMRIRLKDDRRSKSIEERE) is disordered. Position 302 is a phosphoserine (Ser-302). The interval 331–370 (RVNKDASGRSTNSHQSSTENELKYSEPRPWSSTDSDSSLR) is disordered. 2 stretches are compositionally biased toward polar residues: residues 338-349 (GRSTNSHQSSTE) and 360-370 (WSSTDSDSSLR). 3 positions are modified to phosphoserine: Ser-380, Ser-381, and Ser-393. 4 disordered regions span residues 387–439 (VLTR…SSHG), 490–537 (QTGQ…AANH), 583–625 (YIMT…HPVS), and 797–825 (EQVQ…PPPP). A compositionally biased stretch (low complexity) spans 391–422 (GDSSGSSKSIGRLSKTGSESSGSVGSSTGSLS). 2 stretches are compositionally biased toward pro residues: residues 519-532 (PGPP…PPQQ) and 588-611 (APPP…PGQP). Polar residues predominate over residues 797–817 (EQVQFPRTTSPCSSQQLQGHQ). Residue Arg-929 is modified to Asymmetric dimethylarginine; alternate. At Arg-929 the chain carries Omega-N-methylarginine; alternate. Residues 941–977 (PPAVLHGHIPNQQGQPGSRHGNRGRRQAKKAASTDLG) form a disordered region. The span at 960–969 (HGNRGRRQAK) shows a compositional bias: basic residues. Ser-973 is subject to Phosphoserine.

In Homo sapiens (Human), this protein is R3H domain-containing protein 1 (R3HDM1).